The sequence spans 119 residues: Ribonuclease P protein component (119 aa).

The protein belongs to the RnpA family. As to quaternary structure, consists of a catalytic RNA component (M1 or rnpB) and a protein subunit.

The enzyme catalyses Endonucleolytic cleavage of RNA, removing 5'-extranucleotides from tRNA precursor.. RNaseP catalyzes the removal of the 5'-leader sequence from pre-tRNA to produce the mature 5'-terminus. It can also cleave other RNA substrates such as 4.5S RNA. The protein component plays an auxiliary but essential role in vivo by binding to the 5'-leader sequence and broadening the substrate specificity of the ribozyme. The sequence is that of Ribonuclease P protein component from Streptococcus gordonii (strain Challis / ATCC 35105 / BCRC 15272 / CH1 / DL1 / V288).